Here is a 181-residue protein sequence, read N- to C-terminus: Photosystem I assembly protein Ycf4 (181 aa).

A run of 2 helical transmembrane segments spans residues 19–41 (YAWCFILMTGGIGFCLTGVGSYF) and 61–83 (IVMMFYGTIAILFSLFLMYSIFT).

Belongs to the Ycf4 family.

The protein resides in the plastid. It is found in the chloroplast thylakoid membrane. In terms of biological role, seems to be required for the assembly of the photosystem I complex. The protein is Photosystem I assembly protein Ycf4 of Guillardia theta (Cryptophyte).